The following is a 325-amino-acid chain: D site-binding protein (325 aa).

Disordered stretches follow at residues 1 to 99 (MARP…APGL), 127 to 200 (GLPP…DTVE), and 229 to 255 (RFSE…EQKD). A compositionally biased stretch (gly residues) spans 17–28 (GPAGTPPGGGAL). Composition is skewed to low complexity over residues 29–38 (LGLRSLLQGT) and 57–80 (ALPA…PAGA). A Phosphoserine modification is found at Ser86. A compositionally biased stretch (pro residues) spans 129 to 153 (PPSPPPPGGPSPEPSPARTPAPSPG). The span at 157–167 (CGSASPRSSPG) shows a compositional bias: low complexity. One can recognise a bZIP domain in the interval 255–318 (DEKYWSRRYK…SHYRAVLSRY (64 aa)). The segment at 257-279 (KYWSRRYKNNEAAKRSRDARRLK) is basic motif. Positions 283–297 (ISVRAAFLEKENALL) are leucine-zipper.

This sequence belongs to the bZIP family. PAR subfamily. Binds DNA as a homodimer or a heterodimer. Can form a heterodimer with TEF. In terms of tissue distribution, ubiquitously expressed. Expressed in the suprachiasmatic nuclei (SCN) and in most peripheral tissues, with a strong circadian rhythmicity.

Its subcellular location is the nucleus. In terms of biological role, this transcriptional activator recognizes and binds to the sequence 5'-RTTAYGTAAY-3' found in the promoter of genes such as albumin, CYP2A4 and CYP2A5. It is not essential for circadian rhythm generation, but modulates important clock output genes. May be a direct target for regulation by the circadian pacemaker component clock. May affect circadian period and sleep regulation. This chain is D site-binding protein (DBP), found in Homo sapiens (Human).